A 302-amino-acid polypeptide reads, in one-letter code: Glycine--tRNA ligase alpha subunit (302 aa).

Belongs to the class-II aminoacyl-tRNA synthetase family. As to quaternary structure, tetramer of two alpha and two beta subunits.

Its subcellular location is the cytoplasm. The enzyme catalyses tRNA(Gly) + glycine + ATP = glycyl-tRNA(Gly) + AMP + diphosphate. In Enterococcus faecalis (strain ATCC 700802 / V583), this protein is Glycine--tRNA ligase alpha subunit.